A 79-amino-acid chain; its full sequence is ATP synthase subunit c (79 aa).

2 helical membrane passes run methionine 11–leucine 31 and phenylalanine 53–tyrosine 73.

Belongs to the ATPase C chain family. As to quaternary structure, F-type ATPases have 2 components, F(1) - the catalytic core - and F(0) - the membrane proton channel. F(1) has five subunits: alpha(3), beta(3), gamma(1), delta(1), epsilon(1). F(0) has three main subunits: a(1), b(2) and c(10-14). The alpha and beta chains form an alternating ring which encloses part of the gamma chain. F(1) is attached to F(0) by a central stalk formed by the gamma and epsilon chains, while a peripheral stalk is formed by the delta and b chains.

It localises to the cell inner membrane. In terms of biological role, f(1)F(0) ATP synthase produces ATP from ADP in the presence of a proton or sodium gradient. F-type ATPases consist of two structural domains, F(1) containing the extramembraneous catalytic core and F(0) containing the membrane proton channel, linked together by a central stalk and a peripheral stalk. During catalysis, ATP synthesis in the catalytic domain of F(1) is coupled via a rotary mechanism of the central stalk subunits to proton translocation. Key component of the F(0) channel; it plays a direct role in translocation across the membrane. A homomeric c-ring of between 10-14 subunits forms the central stalk rotor element with the F(1) delta and epsilon subunits. In Serratia proteamaculans (strain 568), this protein is ATP synthase subunit c.